The sequence spans 749 residues: Polyribonucleotide nucleotidyltransferase (749 aa).

2 residues coordinate Mg(2+): Asp-487 and Asp-493. The KH domain occupies 554–613 (PSTTTIKIDKDKIRDIIGPGGKIIKEICETSGAKIDISDDGTVSVYASDRDKLKVALDKI). The S1 motif domain occupies 623–691 (GEIFNGTVVK…NKGKAKLTIK (69 aa)). The disordered stretch occupies residues 691–749 (KNADKDKSSNNTKPKTNVNNTNKDNSEPEQRRDSSKKRAWNEDNNAETAEVITERKYFN). A compositionally biased stretch (low complexity) spans 699-713 (SNNTKPKTNVNNTNK). Over residues 714–723 (DNSEPEQRRD) the composition is skewed to basic and acidic residues.

The protein belongs to the polyribonucleotide nucleotidyltransferase family. Mg(2+) is required as a cofactor.

Its subcellular location is the cytoplasm. It carries out the reaction RNA(n+1) + phosphate = RNA(n) + a ribonucleoside 5'-diphosphate. In terms of biological role, involved in mRNA degradation. Catalyzes the phosphorolysis of single-stranded polyribonucleotides processively in the 3'- to 5'-direction. This is Polyribonucleotide nucleotidyltransferase from Rickettsia conorii (strain ATCC VR-613 / Malish 7).